The sequence spans 135 residues: Small ribosomal subunit protein uS11 (135 aa).

Over residues 1–10 (MPPKTRSQTG) the composition is skewed to polar residues. Residues 1–28 (MPPKTRSQTGAKKVRRKEKKNVAHGHAH) are disordered. Basic residues predominate over residues 12–28 (KKVRRKEKKNVAHGHAH).

Belongs to the universal ribosomal protein uS11 family. As to quaternary structure, part of the 30S ribosomal subunit. Interacts with proteins S7 and S18. Binds to IF-3.

Its function is as follows. Located on the platform of the 30S subunit, it bridges several disparate RNA helices of the 16S rRNA. Forms part of the Shine-Dalgarno cleft in the 70S ribosome. This is Small ribosomal subunit protein uS11 from Acidothermus cellulolyticus (strain ATCC 43068 / DSM 8971 / 11B).